The chain runs to 305 residues: Probable 5-dehydro-4-deoxyglucarate dehydratase (305 aa).

Belongs to the DapA family.

It catalyses the reaction 5-dehydro-4-deoxy-D-glucarate + H(+) = 2,5-dioxopentanoate + CO2 + H2O. It functions in the pathway carbohydrate acid metabolism; D-glucarate degradation; 2,5-dioxopentanoate from D-glucarate: step 2/2. The polypeptide is Probable 5-dehydro-4-deoxyglucarate dehydratase (Pseudomonas entomophila (strain L48)).